The chain runs to 159 residues: Ribosomal RNA large subunit methyltransferase H (159 aa).

S-adenosyl-L-methionine contacts are provided by residues Leu76, Gly108, and 127–132; that span reads FSRMTF.

The protein belongs to the RNA methyltransferase RlmH family. Homodimer.

It localises to the cytoplasm. The catalysed reaction is pseudouridine(1915) in 23S rRNA + S-adenosyl-L-methionine = N(3)-methylpseudouridine(1915) in 23S rRNA + S-adenosyl-L-homocysteine + H(+). Its function is as follows. Specifically methylates the pseudouridine at position 1915 (m3Psi1915) in 23S rRNA. This chain is Ribosomal RNA large subunit methyltransferase H, found in Bacillus licheniformis (strain ATCC 14580 / DSM 13 / JCM 2505 / CCUG 7422 / NBRC 12200 / NCIMB 9375 / NCTC 10341 / NRRL NRS-1264 / Gibson 46).